We begin with the raw amino-acid sequence, 461 residues long: Photosystem II CP43 reaction center protein (461 aa).

Positions 1–2 (ME) are excised as a propeptide. Residue T3 is modified to N-acetylthreonine. Residue T3 is modified to Phosphothreonine. 5 helical membrane-spanning segments follow: residues 57–81 (LFEV…PHLA), 122–143 (LLGP…KDRN), 166–188 (KALY…RKIT), 243–263 (KPFA…LSYS), and 279–300 (WFNN…ASQA). E355 provides a ligand contact to [CaMn4O5] cluster. The chain crosses the membrane as a helical span at residues 435–459 (RARAAAAGFEKGIDRDFEPVLSMTP).

This sequence belongs to the PsbB/PsbC family. PsbC subfamily. As to quaternary structure, PSII is composed of 1 copy each of membrane proteins PsbA, PsbB, PsbC, PsbD, PsbE, PsbF, PsbH, PsbI, PsbJ, PsbK, PsbL, PsbM, PsbT, PsbX, PsbY, PsbZ, Psb30/Ycf12, at least 3 peripheral proteins of the oxygen-evolving complex and a large number of cofactors. It forms dimeric complexes. The cofactor is Binds multiple chlorophylls and provides some of the ligands for the Ca-4Mn-5O cluster of the oxygen-evolving complex. It may also provide a ligand for a Cl- that is required for oxygen evolution. PSII binds additional chlorophylls, carotenoids and specific lipids..

It localises to the plastid. The protein localises to the chloroplast thylakoid membrane. Its function is as follows. One of the components of the core complex of photosystem II (PSII). It binds chlorophyll and helps catalyze the primary light-induced photochemical processes of PSII. PSII is a light-driven water:plastoquinone oxidoreductase, using light energy to abstract electrons from H(2)O, generating O(2) and a proton gradient subsequently used for ATP formation. The polypeptide is Photosystem II CP43 reaction center protein (Platanus occidentalis (Sycamore)).